The primary structure comprises 103 residues: MYAVVKTGGKQYRVAAGEKLKVEQIPADIGQEITLDQVLSVGEGDQLKVGTPLVAGAVVKATVLAHGRHDKVKIFKMRRRKHYQKHQGHRQNYTEIRIEAITA.

This sequence belongs to the bacterial ribosomal protein bL21 family. In terms of assembly, part of the 50S ribosomal subunit. Contacts protein L20.

Functionally, this protein binds to 23S rRNA in the presence of protein L20. This Bordetella petrii (strain ATCC BAA-461 / DSM 12804 / CCUG 43448) protein is Large ribosomal subunit protein bL21.